We begin with the raw amino-acid sequence, 262 residues long: Tryptophan synthase alpha chain (262 aa).

Catalysis depends on proton acceptor residues Glu52 and Asp63.

The protein belongs to the TrpA family. Tetramer of two alpha and two beta chains.

The catalysed reaction is (1S,2R)-1-C-(indol-3-yl)glycerol 3-phosphate + L-serine = D-glyceraldehyde 3-phosphate + L-tryptophan + H2O. Its pathway is amino-acid biosynthesis; L-tryptophan biosynthesis; L-tryptophan from chorismate: step 5/5. Its function is as follows. The alpha subunit is responsible for the aldol cleavage of indoleglycerol phosphate to indole and glyceraldehyde 3-phosphate. This is Tryptophan synthase alpha chain from Mycobacteroides abscessus (strain ATCC 19977 / DSM 44196 / CCUG 20993 / CIP 104536 / JCM 13569 / NCTC 13031 / TMC 1543 / L948) (Mycobacterium abscessus).